We begin with the raw amino-acid sequence, 965 residues long: Collagen alpha-1(I) chain (965 aa).

A disordered region spans residues 1-965 (GGISVPGPMG…PGPPGPPGPP (965 aa)). 4-hydroxyproline occurs at positions 18, 21, 23, 32, 35, 38, 53, 68, 74, 83, and 89. The span at 26-44 (QGFQGPPGEPGEPGSSGPM) shows a compositional bias: low complexity. Positions 56–70 (NGDDGEAGKPGRPGE) are enriched in basic and acidic residues. 5-hydroxylysine; alternate is present on K92. Residue K92 is glycosylated (O-linked (Gal...) hydroxylysine; alternate). S98 is subject to Phosphoserine. Low complexity predominate over residues 106-122 (DAGPAGPKGEPGSPGEN). Residues P116, P119, P125, P139, P160, P169, P172, P199, P202, P214, P220, P229, P235, P238, and P253 each carry the 4-hydroxyproline modification. The segment covering 139–157 (PGASGPAGARGNDGATGAA) has biased composition (low complexity). The span at 159 to 171 (PPGPTGPAGPPGF) shows a compositional bias: pro residues. Positions 205 to 244 (AGAAGPAGNPGADGQPGAKGANGAPGIAGAPGFPGARGPS) are enriched in low complexity. At K256 the chain carries 5-hydroxylysine. P262, P265, P269, P278, P293, P299, P308, and P314 each carry 4-hydroxyproline. A compositionally biased stretch (gly residues) spans 303–312 (GERGGPGSRG). A 5-hydroxylysine modification is found at K323. P326, P332, P338, P347, P350, P359, P368, P374, P386, P395, P404, P407, P425, P442, P448, P454, P460, P466, P472, P484, P493, P506, P512, and P521 each carry 4-hydroxyproline. Positions 341–367 (KGLTGSPGSPGPDGKTGPPGPAGQDGR) are enriched in low complexity. The span at 376–395 (ARGQAGVMGFPGPKGAAGEP) shows a compositional bias: low complexity. Positions 454 to 463 (PGEAGKPGEQ) are enriched in low complexity. Position 533 is a 5-hydroxylysine (K533). A 4-hydroxyproline mark is found at P539, P554, and P560. Over residues 566-580 (SGPSGPAGPTGARGA) the composition is skewed to low complexity. S569 is modified (phosphoserine). P581, P587, P590, P599, P605, P623, P632, and P641 each carry 4-hydroxyproline. Residues 593 to 620 (AGFAGPPGADGQPGAKGEPGDAGAKGDA) show a composition bias toward low complexity. K644 is subject to 5-hydroxylysine. Positions 649–665 (SAGPPGATGFPGAAGRV) are enriched in low complexity. Residues P653 and P659 each carry the 4-hydroxyproline modification. P667 is subject to 3-hydroxyproline. 4-hydroxyproline occurs at positions 668, 677, 680, 716, 725, 743, 752, 755, 761, 776, 782, 788, 796, and 802. The segment covering 710–725 (SGEKGSPGADGPAGAP) has biased composition (low complexity). Positions 775-785 (PPGPMGPPGLA) are enriched in pro residues. K811 carries the post-translational modification 5-hydroxylysine. P819, P822, and P825 each carry 4-hydroxyproline. Pro residues predominate over residues 819-831 (PGAPGAPGAPGPV). Residues 851–865 (AGPAGARGPAGPQGP) are compositionally biased toward low complexity. A compositionally biased stretch (basic and acidic residues) spans 866-880 (RGDKGETGEQGDRGI). A 5-hydroxylysine modification is found at K869. The residue at position 881 (K881) is a 5-hydroxylysine; alternate. The O-linked (Gal...) hydroxylysine; alternate glycan is linked to K881. 4 positions are modified to 4-hydroxyproline: P896, P899, P917, and P932. Over residues 899-932 (PGEQGPSGASGPAGPRGPPGSAGSPGKDGLNGLP) the composition is skewed to low complexity. P937 bears the 3-hydroxyproline mark. P938 is modified (4-hydroxyproline). Positions 950–965 (VGPPGPPGPPGPPGPP) are enriched in pro residues. At P952 the chain carries 3-hydroxyproline. P953 is modified (4-hydroxyproline). 3-hydroxyproline is present on P955. P956 is modified (4-hydroxyproline). Residue P958 is modified to 3-hydroxyproline. A 4-hydroxyproline mark is found at P959, P962, and P965.

This sequence belongs to the fibrillar collagen family. In terms of assembly, trimers of one alpha 2(I) and two alpha 1(I) chains. Post-translationally, contains mostly 4-hydroxyproline. Proline residues at the third position of the tripeptide repeating unit (G-X-Y) are hydroxylated in some or all of the chains. Contains 3-hydroxyproline at a few sites. This modification occurs on the first proline residue in the sequence motif Gly-Pro-Hyp, where Hyp is 4-hydroxyproline. In terms of processing, lysine residues at the third position of the tripeptide repeating unit (G-X-Y) are 5-hydroxylated in some or all of the chains. Post-translationally, O-glycosylated on hydroxylated lysine residues. The O-linked glycan consists of a Glc-Gal disaccharide. In terms of tissue distribution, expressed in bones.

The protein localises to the secreted. The protein resides in the extracellular space. It is found in the extracellular matrix. Its function is as follows. Type I collagen is a member of group I collagen (fibrillar forming collagen). This is Collagen alpha-1(I) chain from Acratocnus sp. (strain SLP-2019) (Ground sloth).